We begin with the raw amino-acid sequence, 562 residues long: Putative transport protein YE1478 (562 aa).

The next 6 membrane-spanning stretches (helical) occupy residues 8–28 (LLNG…LCLG), 32–52 (LGPI…LLGQ), 66–86 (FMLF…SIFF), 94–114 (MLAL…GKLF), 118–138 (IGLT…LVGA), and 158–178 (NLSL…ILGA). RCK C-terminal domains are found at residues 202-288 (LDTD…SFRN) and 290-373 (KEVF…KIGF). 5 helical membrane-spanning segments follow: residues 383-403 (LLAF…TFQF), 406-426 (FSFG…LGFL), 447-467 (FGLM…INSS), 475-495 (MLIS…IFGA), and 541-561 (IANV…PGIL).

This sequence belongs to the AAE transporter (TC 2.A.81) family. YbjL subfamily.

It is found in the cell membrane. This is Putative transport protein YE1478 from Yersinia enterocolitica serotype O:8 / biotype 1B (strain NCTC 13174 / 8081).